We begin with the raw amino-acid sequence, 61 residues long: Small ribosomal subunit protein uS14 (61 aa).

Cysteine 24, cysteine 27, cysteine 40, and cysteine 43 together coordinate Zn(2+).

Belongs to the universal ribosomal protein uS14 family. Zinc-binding uS14 subfamily. In terms of assembly, part of the 30S ribosomal subunit. Contacts proteins S3 and S10. It depends on Zn(2+) as a cofactor.

Functionally, binds 16S rRNA, required for the assembly of 30S particles and may also be responsible for determining the conformation of the 16S rRNA at the A site. The chain is Small ribosomal subunit protein uS14 from Finegoldia magna (strain ATCC 29328 / DSM 20472 / WAL 2508) (Peptostreptococcus magnus).